Reading from the N-terminus, the 674-residue chain is Zyxin (674 aa).

A disordered region spans residues 35 to 447 (PPKPKVNPFR…PHQDQTSGSQ (413 aa)). A compositionally biased stretch (pro residues) spans 86–109 (LPPPPPNEEPMSPPGSSFPPPPPS). Low complexity predominate over residues 110 to 120 (FGDDGPGSPLG). Composition is skewed to pro residues over residues 121 to 148 (LFPPPPPPEFSEPFPPPIEESFPSPPPL), 162 to 180 (ASVPPPPPPLPSPPEPAPP), 187 to 209 (KPAPVLPKPPPPSAFPKPEPPQS), 222 to 240 (KPSPPSAVAPKPVAPPPVA), and 254 to 266 (AAPPTHTPAPPAP). Basic and acidic residues-rich tracts occupy residues 328 to 341 (AKHEAPPPAAKHEA) and 358 to 387 (QRDKPRVLEKPRANVRDLVPEPPVETRGER). LIM zinc-binding domains lie at 481–542 (ELCG…TLEC), 543–600 (CAVC…RRYA), and 601–671 (PRCT…RARA).

The protein belongs to the zyxin/ajuba family. Interacts (via LIM2 domain) with hesx1/anf1.

The protein localises to the cytoplasm. The protein resides in the cytoskeleton. It localises to the cell junction. It is found in the focal adhesion. Adhesion plaque protein. May be a component of a signal transduction pathway that mediates adhesion-stimulated changes in gene expression. Suppresses the transcription-repressing activity of hesx1/anf1. This Xenopus tropicalis (Western clawed frog) protein is Zyxin.